Here is a 426-residue protein sequence, read N- to C-terminus: MELVHSATFPCKQKLLIAVTIATSLLTIIPLLYPLLEDPNFFLKQQPPSQSSIINLENGVVTSHDSCDIFSGEWVPNPEAPYYTNTTCWAIHEHQNCMKFGRPDTDFIKWKWKPYGCEDGLPVFDPVRFLEIVRGKTMAFVGDSVSRNHMQSLICLLSQVEYPMDASVKNDDYFKRWTYETYNFTIAAFWTPHLVKSKEPDQTQPKHIDIFDLYLDEADESWTADIGDFDFVIISSGHWHYRPSVYYENRTITGCHYCQLPNITDLTMFYGYRKAFRTAFKAILDSESFKGVMYLRSFAPSHFEGGLWNEGGDCLRKQPYRSNETQDETTMKLHKIQLEEFWRAEEEAKKKGKRLRLLDTTQAMWLRPDGHPSRYGHIPEANVTLYNDCVHWCLPGPIDNLNDFLLAMLKREEDKGFLAQVRKMLS.

The chain crosses the membrane as a helical; Signal-anchor for type II membrane protein span at residues leucine 15–leucine 35. A GDS motif motif is present at residues glycine 142–serine 144. Residues aspartate 388 to asparagine 402 carry the DCXHWCLPGXXDXWN motif motif.

Belongs to the PC-esterase family. TBL subfamily.

Its subcellular location is the membrane. May act as a bridging protein that binds pectin and other cell wall polysaccharides. Probably involved in maintaining esterification of pectins. May be involved in the specific O-acetylation of cell wall polymers. This Arabidopsis thaliana (Mouse-ear cress) protein is Protein trichome birefringence-like 19 (TBL19).